The sequence spans 520 residues: Nuclear GTP-binding protein NUG1 (520 aa).

Composition is skewed to basic residues over residues 1–13 (MRVR…RTST) and 21–34 (KKAS…KKMA). The tract at residues 1–53 (MRVRKRQSRRTSTKLKEGIKKKASAHRKKEKKMAKKDVTWRSRSKKDPGIPSN) is disordered. Over residues 35-48 (KKDVTWRSRSKKDP) the composition is skewed to basic and acidic residues. The region spanning 165–343 (YDKIFKSVID…ILDSPGICFP (179 aa)) is the CP-type G domain. Residues 213–216 (NKVD), 287–294 (GYPNVGKS), and 336–339 (DSPG) each bind GTP. Position 337 is a phosphoserine (serine 337).

Belongs to the TRAFAC class YlqF/YawG GTPase family.

It localises to the nucleus. In terms of biological role, GTPase required for 60S ribosomal subunit export to the cytoplasm. In Saccharomyces cerevisiae (strain ATCC 204508 / S288c) (Baker's yeast), this protein is Nuclear GTP-binding protein NUG1 (NUG1).